The primary structure comprises 259 residues: uncharacterized protein (259 aa).

Residues 171–259 (LSKMPVPQSP…SYSTYEDDDF (89 aa)) are disordered. Residues 179–201 (SPSVPTMPSVNNDQPTQKPNKIT) show a composition bias toward polar residues. Residues 202 to 211 (RNYKPKHQHN) are compositionally biased toward basic residues. The span at 212–236 (YKPNYQPNYQPNYGQNCSNSHSNDY) shows a compositional bias: polar residues.

It is found in the virion. This is an uncharacterized protein from Acanthamoeba polyphaga (Amoeba).